The sequence spans 408 residues: Energy-coupling factor transporter ATP-binding protein EcfA1 (408 aa).

The 235-residue stretch at Ile140–Asp374 folds into the ABC transporter domain. Gly174–Ser181 contributes to the ATP binding site.

Belongs to the ABC transporter superfamily. Energy-coupling factor EcfA family. As to quaternary structure, forms a stable energy-coupling factor (ECF) transporter complex composed of 2 membrane-embedded substrate-binding proteins (S component), 2 ATP-binding proteins (A component) and 2 transmembrane proteins (T component).

The protein localises to the cell membrane. Its function is as follows. ATP-binding (A) component of a common energy-coupling factor (ECF) ABC-transporter complex. Unlike classic ABC transporters this ECF transporter provides the energy necessary to transport a number of different substrates. The polypeptide is Energy-coupling factor transporter ATP-binding protein EcfA1 (Mycoplasma mycoides subsp. mycoides SC (strain CCUG 32753 / NCTC 10114 / PG1)).